We begin with the raw amino-acid sequence, 193 residues long: ECF RNA polymerase sigma factor SigK (193 aa).

Positions 35–101 (LYDRTRSRVY…RRAVDRVRSE (67 aa)) are sigma-70 factor domain-2. The Polymerase core binding signature appears at 59 to 62 (ETTQ). The interval 140-187 (MGSLSDLQREAIQLAYYEGLTYVQVSERLSANLATIKSRMRGGIRGLK) is sigma-70 factor domain-4. The segment at residues 161 to 180 (YVQVSERLSANLATIKSRMR) is a DNA-binding region (H-T-H motif).

The protein belongs to the sigma-70 factor family. ECF subfamily. As to quaternary structure, interacts transiently with the RNA polymerase catalytic core formed by RpoA, RpoB, RpoC and RpoZ (2 alpha, 1 beta, 1 beta' and 1 omega subunit) to form the RNA polymerase holoenzyme that can initiate transcription. Interacts (via sigma-70 factor domain 4) with anti-sigma-K factor RskA.

Functionally, sigma factors are initiation factors that promote the attachment of RNA polymerase to specific initiation sites and are then released. Extracytoplasmic function (ECF) sigma factors are held in an inactive form by an anti-sigma factor until released by regulated intramembrane proteolysis. The polypeptide is ECF RNA polymerase sigma factor SigK (sigK) (Mycobacterium sp. (strain KMS)).